The chain runs to 580 residues: tRNA-guanine(15) transglycosylase (580 aa).

Residue Asp-91 is the Nucleophile of the active site. Positions 126 and 192 each coordinate substrate. The Zn(2+) site is built by Cys-275, Cys-277, and Cys-280. Residues 504-579 form the PUA domain; that stretch reads RMRVVVDEDA…LAVKVRRGVE (76 aa).

This sequence belongs to the archaeosine tRNA-ribosyltransferase family. Requires Zn(2+) as cofactor.

The enzyme catalyses guanosine(15) in tRNA + 7-cyano-7-deazaguanine = 7-cyano-7-carbaguanosine(15) in tRNA + guanine. It functions in the pathway tRNA modification; archaeosine-tRNA biosynthesis. Functionally, exchanges the guanine residue with 7-cyano-7-deazaguanine (preQ0) at position 15 in the dihydrouridine loop (D-loop) of archaeal tRNAs. This Thermococcus kodakarensis (strain ATCC BAA-918 / JCM 12380 / KOD1) (Pyrococcus kodakaraensis (strain KOD1)) protein is tRNA-guanine(15) transglycosylase.